The primary structure comprises 312 residues: tRNA pseudouridine synthase B (312 aa).

Asp37 functions as the Nucleophile in the catalytic mechanism.

This sequence belongs to the pseudouridine synthase TruB family. Type 1 subfamily.

It catalyses the reaction uridine(55) in tRNA = pseudouridine(55) in tRNA. Its function is as follows. Responsible for synthesis of pseudouridine from uracil-55 in the psi GC loop of transfer RNAs. The polypeptide is tRNA pseudouridine synthase B (Deinococcus geothermalis (strain DSM 11300 / CIP 105573 / AG-3a)).